The following is a 220-amino-acid chain: uncharacterized protein (220 aa).

The tract at residues 1-50 (MTDDVRDVNTETTDATEVAEIDSAAGEAGDSATEAFDTDSATESTAQKGQ) is disordered. Positions 39–48 (DSATESTAQK) are enriched in polar residues. Residues 65–85 (VPVILILLMLISGGATGWLYL) form a helical membrane-spanning segment.

The protein to M.tuberculosis Rv1363c.

Its subcellular location is the membrane. This is an uncharacterized protein from Mycobacterium tuberculosis (strain CDC 1551 / Oshkosh).